A 491-amino-acid polypeptide reads, in one-letter code: Peptidoglycan D,D-transpeptidase PbpA (491 aa).

Residues 1 to 8 are Cytoplasmic-facing; that stretch reads MNTSLRRV. A helical; Signal-anchor for type II membrane protein transmembrane segment spans residues 9–29; that stretch reads AVAIMVLIVLLLANATVTQVF. At 30-491 the chain is on the periplasmic side; that stretch reads AADGLRADPR…TIAAALREGS (462 aa). Residues 160–484 are transpeptidase; the sequence is GSVVALEPST…AAPIGRATIA (325 aa). Ser222 (acyl-ester intermediate) is an active-site residue.

The protein belongs to the transpeptidase family.

The protein localises to the cell inner membrane. The enzyme catalyses Preferential cleavage: (Ac)2-L-Lys-D-Ala-|-D-Ala. Also transpeptidation of peptidyl-alanyl moieties that are N-acyl substituents of D-alanine.. It participates in cell wall biogenesis; peptidoglycan biosynthesis. Transpeptidase that catalyzes cross-linking of the peptidoglycan cell wall. Required for the regulation of cell length. This Mycolicibacterium smegmatis (strain ATCC 700084 / mc(2)155) (Mycobacterium smegmatis) protein is Peptidoglycan D,D-transpeptidase PbpA (pbpA).